Reading from the N-terminus, the 373-residue chain is DNA replication and repair protein RecF (373 aa).

30–37 (GENAQGKT) serves as a coordination point for ATP.

The protein belongs to the RecF family.

It localises to the cytoplasm. The RecF protein is involved in DNA metabolism; it is required for DNA replication and normal SOS inducibility. RecF binds preferentially to single-stranded, linear DNA. It also seems to bind ATP. This is DNA replication and repair protein RecF from Bacillus cytotoxicus (strain DSM 22905 / CIP 110041 / 391-98 / NVH 391-98).